The primary structure comprises 87 residues: Antitoxin RelB1 (87 aa).

Its function is as follows. Antitoxin component of a type II toxin-antitoxin (TA) system. Neutralizes the effect of cognate toxin RelE1, but no other RelE or ParE toxin. The polypeptide is Antitoxin RelB1 (relB1) (Caulobacter vibrioides (strain ATCC 19089 / CIP 103742 / CB 15) (Caulobacter crescentus)).